A 206-amino-acid polypeptide reads, in one-letter code: Holliday junction branch migration complex subunit RuvA (206 aa).

The segment at 1 to 68 (MITFVRGMLA…EDAMQLFGFL (68 aa)) is domain I. The segment at 69-147 (EPGERELFGQ…KWREESGLSA (79 aa)) is domain II. The segment at 147 to 151 (AMGAR) is flexible linker. The segment at 152–206 (ASSRVYEEVELALLALGFAPGEVVRALDAVAPAMAGEEQTEAWLRAAIAWLSEQG) is domain III.

This sequence belongs to the RuvA family. In terms of assembly, homotetramer. Forms an RuvA(8)-RuvB(12)-Holliday junction (HJ) complex. HJ DNA is sandwiched between 2 RuvA tetramers; dsDNA enters through RuvA and exits via RuvB. An RuvB hexamer assembles on each DNA strand where it exits the tetramer. Each RuvB hexamer is contacted by two RuvA subunits (via domain III) on 2 adjacent RuvB subunits; this complex drives branch migration. In the full resolvosome a probable DNA-RuvA(4)-RuvB(12)-RuvC(2) complex forms which resolves the HJ.

It is found in the cytoplasm. The RuvA-RuvB-RuvC complex processes Holliday junction (HJ) DNA during genetic recombination and DNA repair, while the RuvA-RuvB complex plays an important role in the rescue of blocked DNA replication forks via replication fork reversal (RFR). RuvA specifically binds to HJ cruciform DNA, conferring on it an open structure. The RuvB hexamer acts as an ATP-dependent pump, pulling dsDNA into and through the RuvAB complex. HJ branch migration allows RuvC to scan DNA until it finds its consensus sequence, where it cleaves and resolves the cruciform DNA. This is Holliday junction branch migration complex subunit RuvA from Gloeobacter violaceus (strain ATCC 29082 / PCC 7421).